An 864-amino-acid chain; its full sequence is Leucine--tRNA ligase (864 aa).

Positions 42-52 (PYPSGRLHMGH) match the 'HIGH' region motif. The 'KMSKS' region signature appears at 621–625 (KMSKS). Lysine 624 is an ATP binding site.

Belongs to the class-I aminoacyl-tRNA synthetase family.

It localises to the cytoplasm. The enzyme catalyses tRNA(Leu) + L-leucine + ATP = L-leucyl-tRNA(Leu) + AMP + diphosphate. In Alkalilimnicola ehrlichii (strain ATCC BAA-1101 / DSM 17681 / MLHE-1), this protein is Leucine--tRNA ligase.